The following is an 899-amino-acid chain: Solute carrier family 12 member 9 (899 aa).

At 1–44 the chain is on the cytoplasmic side; sequence MTSESSPLLHYRLFSVSDGGLGPPDSSPIMTDAVTVGTGPTQRK. A helical membrane pass occupies residues 45–65; the sequence is LSTFFGVVVPTVLSMFSIVVF. Residues 66–80 are Extracellular-facing; the sequence is MRIGFVVGHAGLLQS. The chain crosses the membrane as a helical span at residues 81 to 101; the sequence is LLMLFVAYVIIWLTVLSVCAI. The Cytoplasmic portion of the chain corresponds to 102 to 127; sequence STNGAVQGGGAYFMISRTLGPEFGGS. Residues 128 to 148 traverse the membrane as a helical segment; the sequence is IGLMFYLANVFACGVYVLGLV. Over 149-176 the chain is Extracellular; that stretch reads EAVLDVFGRDPSDVTDSLRSLPQGYGYS. Residues 177–197 traverse the membrane as a helical segment; sequence FLYASIILLLCMAICLVGASI. Residues 198 to 202 lie on the Cytoplasmic side of the membrane; it reads YSQAS. A helical transmembrane segment spans residues 203-223; sequence FFIFLLVFVVLLTILISFLAV. Residues 224 to 266 lie on the Extracellular side of the membrane; it reads RPLTVSIRHGGNVTMTGVYTGINSSTLHNNLQADYSLDYTTGN. N-linked (GlcNAc...) asparagine glycosylation is found at Asn235 and Asn246. A helical membrane pass occupies residues 267–287; sequence LMNFATVFAVMFNGCTGIMAG. The Cytoplasmic segment spans residues 288–304; it reads CNLSGELKQPSRSIPMG. A helical membrane pass occupies residues 305–325; the sequence is TIIAVIITFFVYLILFIFTAF. Over 326 to 347 the chain is Extracellular; it reads TCDRTLLREDYGFFRSINIWPP. A helical transmembrane segment spans residues 348 to 368; sequence FVLIGVYATSLSASMSTLIGA. The Cytoplasmic segment spans residues 369–393; that stretch reads SRILHALAKDDLFGVLLAPAKLVSK. Residues 394 to 414 form a helical membrane-spanning segment; that stretch reads GGNPWGAVVYTWALVQLVLLA. Over 415–419 the chain is Extracellular; sequence GKLNT. A helical membrane pass occupies residues 420–440; sequence IAGIVTVFYLIAYAAIDLACL. Over 441-469 the chain is Cytoplasmic; that stretch reads ALEWASAPNFRPTFRFFSWHTCLLGILSS. Residues 470 to 490 form a helical membrane-spanning segment; it reads LVMMFLINPAYASGSIVLLLL. Residues 491–739 lie on the Extracellular side of the membrane; sequence LLGSIHFRSS…PLDLLRPQAS (249 aa). The chain crosses the membrane as a helical span at residues 740–760; sequence AYVDVCSLFLLQMACILNMAA. The Cytoplasmic portion of the chain corresponds to 761-899; that stretch reads SWRRYQLRVF…GLTPVTCTEL (139 aa).

This sequence belongs to the SLC12A transporter family.

It localises to the cell membrane. The protein localises to the lysosome membrane. In terms of biological role, seems to correspond to a subunit of a multimeric transport system and thus, additional subunits may be required for its function. May play a role in lysosomal ion flux and osmoregulation. The chain is Solute carrier family 12 member 9 (slc12a9) from Xenopus laevis (African clawed frog).